Here is a 103-residue protein sequence, read N- to C-terminus: MYAVFQSGGKQHRVTEGQTVRLEKLELEVGATVEFDNVLMIANGDNINVGAPYVAGGKVVAEVVTQARAPKITIVKFKRRKHSRKQAGHRQWFTEVKITGING.

This sequence belongs to the bacterial ribosomal protein bL21 family. As to quaternary structure, part of the 50S ribosomal subunit. Contacts protein L20.

In terms of biological role, this protein binds to 23S rRNA in the presence of protein L20. This chain is Large ribosomal subunit protein bL21, found in Colwellia psychrerythraea (strain 34H / ATCC BAA-681) (Vibrio psychroerythus).